A 140-amino-acid polypeptide reads, in one-letter code: GTP-dependent dephospho-CoA kinase (140 aa).

GTP-binding residues include Asp-21, Val-22, Val-23, Asp-40, Lys-42, and Glu-92.

Belongs to the GTP-dependent DPCK family.

It catalyses the reaction 3'-dephospho-CoA + GTP = GDP + CoA + H(+). It participates in cofactor biosynthesis; coenzyme A biosynthesis. Its function is as follows. Catalyzes the GTP-dependent phosphorylation of the 3'-hydroxyl group of dephosphocoenzyme A to form coenzyme A (CoA). The sequence is that of GTP-dependent dephospho-CoA kinase from Pyrobaculum aerophilum (strain ATCC 51768 / DSM 7523 / JCM 9630 / CIP 104966 / NBRC 100827 / IM2).